The sequence spans 266 residues: Ribonuclease 3 (266 aa).

Positions 1–35 are disordered; it reads MMDESADIKPVPTSEDVAAPSGTEPVAPAPKKKRA. Positions 43–171 constitute an RNase III domain; the sequence is MAAIEQRLGH…VIGAVYLDGG (129 aa). E84 serves as a coordination point for Mg(2+). D88 is an active-site residue. The Mg(2+) site is built by D157 and E160. The active site involves E160. Residues 196 to 265 form the DRBM domain; that stretch reads DPKTVLQEWA…ASAMIVREGV (70 aa).

Belongs to the ribonuclease III family. In terms of assembly, homodimer. It depends on Mg(2+) as a cofactor.

Its subcellular location is the cytoplasm. It catalyses the reaction Endonucleolytic cleavage to 5'-phosphomonoester.. Digests double-stranded RNA. Involved in the processing of primary rRNA transcript to yield the immediate precursors to the large and small rRNAs (23S and 16S). Processes some mRNAs, and tRNAs when they are encoded in the rRNA operon. Processes pre-crRNA and tracrRNA of type II CRISPR loci if present in the organism. In Nitrobacter winogradskyi (strain ATCC 25391 / DSM 10237 / CIP 104748 / NCIMB 11846 / Nb-255), this protein is Ribonuclease 3.